Consider the following 1452-residue polypeptide: Pleiotropic drug resistance protein 1 (1452 aa).

The ABC transporter 1 domain maps to Leu-152–Glu-425. Gly-185 to Thr-192 is a binding site for ATP. Residues Leu-504–Phe-716 form the ABC transmembrane type-2 1 domain. The next 7 helical transmembrane spans lie at Phe-521 to Phe-541, Gly-554 to Ser-574, Ile-609 to Phe-629, Leu-640 to Leu-660, Ile-664 to Phe-684, Trp-694 to Asn-714, and Ile-753 to Leu-773. The disordered stretch occupies residues Leu-808–Ser-830. Basic and acidic residues predominate over residues Ser-812–Arg-821. Residues Ile-855–Asp-1107 enclose the ABC transporter 2 domain. Gly-900–Thr-907 is a binding site for ATP. The region spanning Thr-1180 to Phe-1394 is the ABC transmembrane type-2 2 domain. A run of 7 helical transmembrane segments spans residues Tyr-1199 to Trp-1219, Tyr-1239 to Ile-1259, Leu-1287 to Phe-1307, Phe-1314 to Met-1334, Ile-1344 to Val-1364, Trp-1375 to Gly-1395, and Phe-1421 to Ala-1441.

This sequence belongs to the ABC transporter superfamily. ABCG family. PDR (TC 3.A.1.205) subfamily. As to expression, expressed in root hypodermal passage cells. Expressed in stem tissues, particularly the vasculature and nodes adjacent to leaf axils.

The protein localises to the cell membrane. Cellular strigolactone (SL) transporter required for the exudation of SL from the root to the soil. The presence of SL in the vicinity of the roots is required for development of symbiotic interactions with arbuscular mycorrhizal fungi (AMF). Transports SL in the above ground tissues and is required for the control of shoot branching. SL regulates plant shoot architecture by inhibiting the outgrowth of axillary buds. Involved in the regulation of shootward and outward directional strigolactone transport in roots. Due to its polar localization in root cells, mediates directional shootward strigolactone transport, as well as localized outward directional transport for exudation to the soil. The polypeptide is Pleiotropic drug resistance protein 1 (Petunia hybrida (Petunia)).